The following is a 424-amino-acid chain: Tol-Pal system protein TolB (424 aa).

Residues 1–16 form the signal peptide; it reads MKQLLVLILSLYTTLA.

It belongs to the TolB family. The Tol-Pal system is composed of five core proteins: the inner membrane proteins TolA, TolQ and TolR, the periplasmic protein TolB and the outer membrane protein Pal. They form a network linking the inner and outer membranes and the peptidoglycan layer.

It localises to the periplasm. Functionally, part of the Tol-Pal system, which plays a role in outer membrane invagination during cell division and is important for maintaining outer membrane integrity. The chain is Tol-Pal system protein TolB from Ruthia magnifica subsp. Calyptogena magnifica.